Consider the following 122-residue polypeptide: Large ribosomal subunit protein uL14 (122 aa).

It belongs to the universal ribosomal protein uL14 family. Part of the 50S ribosomal subunit. Forms a cluster with proteins L3 and L19. In the 70S ribosome, L14 and L19 interact and together make contacts with the 16S rRNA in bridges B5 and B8.

In terms of biological role, binds to 23S rRNA. Forms part of two intersubunit bridges in the 70S ribosome. This chain is Large ribosomal subunit protein uL14, found in Streptococcus suis (strain 05ZYH33).